The chain runs to 125 residues: Phosphoribosyl-AMP cyclohydrolase (125 aa).

Aspartate 74 is a Mg(2+) binding site. Residue cysteine 75 coordinates Zn(2+). 2 residues coordinate Mg(2+): aspartate 76 and aspartate 78. 2 residues coordinate Zn(2+): cysteine 92 and cysteine 99.

This sequence belongs to the PRA-CH family. Homodimer. Mg(2+) serves as cofactor. It depends on Zn(2+) as a cofactor.

The protein resides in the cytoplasm. It catalyses the reaction 1-(5-phospho-beta-D-ribosyl)-5'-AMP + H2O = 1-(5-phospho-beta-D-ribosyl)-5-[(5-phospho-beta-D-ribosylamino)methylideneamino]imidazole-4-carboxamide. Its pathway is amino-acid biosynthesis; L-histidine biosynthesis; L-histidine from 5-phospho-alpha-D-ribose 1-diphosphate: step 3/9. Catalyzes the hydrolysis of the adenine ring of phosphoribosyl-AMP. The sequence is that of Phosphoribosyl-AMP cyclohydrolase from Desulforapulum autotrophicum (strain ATCC 43914 / DSM 3382 / VKM B-1955 / HRM2) (Desulfobacterium autotrophicum).